The primary structure comprises 312 residues: tRNA dimethylallyltransferase (312 aa).

11-18 (GPTAVGKT) serves as a coordination point for ATP. 13–18 (TAVGKT) provides a ligand contact to substrate. The interaction with substrate tRNA stretch occupies residues 159-163 (QRVLR).

It belongs to the IPP transferase family. In terms of assembly, monomer. Requires Mg(2+) as cofactor.

The catalysed reaction is adenosine(37) in tRNA + dimethylallyl diphosphate = N(6)-dimethylallyladenosine(37) in tRNA + diphosphate. In terms of biological role, catalyzes the transfer of a dimethylallyl group onto the adenine at position 37 in tRNAs that read codons beginning with uridine, leading to the formation of N6-(dimethylallyl)adenosine (i(6)A). The sequence is that of tRNA dimethylallyltransferase from Macrococcus caseolyticus (strain JCSC5402) (Macrococcoides caseolyticum).